We begin with the raw amino-acid sequence, 935 residues long: Protein HIRA (935 aa).

WD repeat units follow at residues 14 to 58 (HDTG…DKKK), 72 to 111 (ESQS…NSMG), 131 to 170 (GHSM…DRIT), 174 to 213 (DIQL…CVKS), 222 to 261 (IEET…QTWK), 277 to 320 (RAMP…KPLF), and 325 to 362 (IFNH…IGEM). A disordered region spans residues 431 to 556 (SSDIQLTKSM…RNKKRKVPAT (126 aa)). Residues 439 to 468 (SMEDNSKENESKNSEKTMMEERNKQIDVRK) are compositionally biased toward basic and acidic residues. Residues 480–492 (GTTTADPMTSLSS) are compositionally biased toward polar residues. Acidic residues predominate over residues 520–542 (DLEDSSDSDDDDEEEEEDMEISD).

Belongs to the WD repeat HIR1 family.

The protein resides in the nucleus. Required for replication-independent chromatin assembly and for the periodic repression of histone gene transcription during the cell cycle. The chain is Protein HIRA from Caenorhabditis elegans.